The primary structure comprises 58 residues: UPF0391 membrane protein VP0082 (58 aa).

2 helical membrane-spanning segments follow: residues 4–24 and 30–50; these read WMFI…SGIA and VAQV…VFVI.

It belongs to the UPF0391 family.

It is found in the cell membrane. The sequence is that of UPF0391 membrane protein VP0082 from Vibrio parahaemolyticus serotype O3:K6 (strain RIMD 2210633).